The primary structure comprises 219 residues: Transcriptional regulatory protein QseB (219 aa).

A Response regulatory domain is found at Arg2 to Val116. At Asp51 the chain carries 4-aspartylphosphate. The ompR/PhoB-type DNA-binding region spans Ser124–Asp218.

Post-translationally, phosphorylated by QseC.

It is found in the cytoplasm. In terms of biological role, member of a two-component regulatory system QseB/QseC. Activates the flagella regulon by activating transcription of flhDC. This Salmonella typhimurium (strain LT2 / SGSC1412 / ATCC 700720) protein is Transcriptional regulatory protein QseB (qseB).